The following is a 128-amino-acid chain: Sulfurtransferase TusD (128 aa).

Catalysis depends on Cys-78, which acts as the Cysteine persulfide intermediate.

The protein belongs to the DsrE/TusD family. Heterohexamer, formed by a dimer of trimers. The hexameric TusBCD complex contains 2 copies each of TusB, TusC and TusD. The TusBCD complex interacts with TusE.

It is found in the cytoplasm. Part of a sulfur-relay system required for 2-thiolation of 5-methylaminomethyl-2-thiouridine (mnm(5)s(2)U) at tRNA wobble positions. Accepts sulfur from TusA and transfers it in turn to TusE. The protein is Sulfurtransferase TusD of Escherichia coli O17:K52:H18 (strain UMN026 / ExPEC).